Here is a 54-residue protein sequence, read N- to C-terminus: Anti-adapter protein SpxO (54 aa).

As to quaternary structure, interacts with SpxH.

Its function is as follows. Inhibitor of Spx proteolytic control. Acts by interacting with SpxH/YjbH, which disrupts interaction between SpxH and Spx, and inhibits SpxH-enhanced proteolysis of Spx by ClpXP. Required for the stabilization of Spx and activation of Spx-regulated genes in response to cell wall stress. The chain is Anti-adapter protein SpxO from Bacillus subtilis (strain 168).